The chain runs to 119 residues: MIIGIGIDIVELERIEQLMMKNEKFIDRILTEEEKRIFFQLSPKRKVEFLAGRFAAKEAYAKAIGTGIGKNVSFHDIQIMNDDNGKPIVVSNGKDCRIHVSISHSRDYAIAQVIIERLS.

Residues D8 and E58 each contribute to the Mg(2+) site.

It belongs to the P-Pant transferase superfamily. AcpS family. It depends on Mg(2+) as a cofactor.

Its subcellular location is the cytoplasm. It catalyses the reaction apo-[ACP] + CoA = holo-[ACP] + adenosine 3',5'-bisphosphate + H(+). In terms of biological role, transfers the 4'-phosphopantetheine moiety from coenzyme A to a Ser of acyl-carrier-protein. This is Holo-[acyl-carrier-protein] synthase from Geobacillus sp. (strain WCH70).